A 449-amino-acid chain; its full sequence is UDP-N-acetylmuramoylalanine--D-glutamate ligase (449 aa).

111–117 (GTNGKST) contacts ATP.

It belongs to the MurCDEF family.

It is found in the cytoplasm. The enzyme catalyses UDP-N-acetyl-alpha-D-muramoyl-L-alanine + D-glutamate + ATP = UDP-N-acetyl-alpha-D-muramoyl-L-alanyl-D-glutamate + ADP + phosphate + H(+). It participates in cell wall biogenesis; peptidoglycan biosynthesis. In terms of biological role, cell wall formation. Catalyzes the addition of glutamate to the nucleotide precursor UDP-N-acetylmuramoyl-L-alanine (UMA). The polypeptide is UDP-N-acetylmuramoylalanine--D-glutamate ligase (Rickettsia felis (strain ATCC VR-1525 / URRWXCal2) (Rickettsia azadi)).